We begin with the raw amino-acid sequence, 360 residues long: Peptide chain release factor 1 (360 aa).

N5-methylglutamine is present on glutamine 235.

Belongs to the prokaryotic/mitochondrial release factor family. Methylated by PrmC. Methylation increases the termination efficiency of RF1.

The protein localises to the cytoplasm. Its function is as follows. Peptide chain release factor 1 directs the termination of translation in response to the peptide chain termination codons UAG and UAA. The polypeptide is Peptide chain release factor 1 (Burkholderia mallei (strain NCTC 10247)).